Here is a 216-residue protein sequence, read N- to C-terminus: Thiopurine S-methyltransferase (216 aa).

Residues Trp-10, Leu-45, Glu-66, and Arg-123 each coordinate S-adenosyl-L-methionine.

It belongs to the class I-like SAM-binding methyltransferase superfamily. TPMT family.

The protein localises to the cytoplasm. The catalysed reaction is S-adenosyl-L-methionine + a thiopurine = S-adenosyl-L-homocysteine + a thiopurine S-methylether.. The protein is Thiopurine S-methyltransferase of Pseudomonas entomophila (strain L48).